Consider the following 396-residue polypeptide: MFRYLLCSFGLVLMYPTGIDMYLVGLPQIASQLGASEAQLHIAFSVYLAGMATTMLFAGSLADRIGRKPITLFGALLFALASYFAAGSQTSDLFLIARFAQGIGAGCCYVVAFAILRDVLDDKRRAKVLSMVNGVTCIIPVIAPVIGHLIMLKFPWPSLFYTMAAMGLLVFALCLLVLRETHSKAAFHTQALPGVQRESFKQGFFISRLVITTLGVTTILSYVNVSPMLIMGQMGFDRGQYSNTMAMMALVSMLASFSTPFLLNRFKEKSLILFSQGLFVAAALVFILTQLGGVSHSFNLLGFAFVCSGFSIGFGVTMSQALSPFVARAGVASSLLGIAQVCTSALYIWVMGLLEVSAINILLLILSVGALVSITLMLAVPKMSEMVVNEQIPESA.

Topologically, residues 1-4 (MFRY) are cytoplasmic. Residues 5 to 25 (LLCSFGLVLMYPTGIDMYLVG) traverse the membrane as a helical segment. Topologically, residues 26 to 41 (LPQIASQLGASEAQLH) are periplasmic. The chain crosses the membrane as a helical span at residues 42 to 62 (IAFSVYLAGMATTMLFAGSLA). Topologically, residues 63 to 68 (DRIGRK) are cytoplasmic. The chain crosses the membrane as a helical span at residues 69–89 (PITLFGALLFALASYFAAGSQ). Residues 90–92 (TSD) are Periplasmic-facing. Residues 93 to 113 (LFLIARFAQGIGAGCCYVVAF) traverse the membrane as a helical segment. The Cytoplasmic segment spans residues 114-131 (AILRDVLDDKRRAKVLSM). Residues 132–152 (VNGVTCIIPVIAPVIGHLIML) form a helical membrane-spanning segment. Residues 153–157 (KFPWP) lie on the Periplasmic side of the membrane. Residues 158 to 178 (SLFYTMAAMGLLVFALCLLVL) form a helical membrane-spanning segment. The Cytoplasmic portion of the chain corresponds to 179–209 (RETHSKAAFHTQALPGVQRESFKQGFFISRL). Residues 210 to 230 (VITTLGVTTILSYVNVSPMLI) traverse the membrane as a helical segment. Topologically, residues 231-242 (MGQMGFDRGQYS) are periplasmic. The helical transmembrane segment at 243–263 (NTMAMMALVSMLASFSTPFLL) threads the bilayer. Residues 264–270 (NRFKEKS) lie on the Cytoplasmic side of the membrane. A helical transmembrane segment spans residues 271–291 (LILFSQGLFVAAALVFILTQL). Residues 292–297 (GGVSHS) are Periplasmic-facing. Residues 298–318 (FNLLGFAFVCSGFSIGFGVTM) traverse the membrane as a helical segment. Topologically, residues 319 to 333 (SQALSPFVARAGVAS) are cytoplasmic. The helical transmembrane segment at 334–354 (SLLGIAQVCTSALYIWVMGLL) threads the bilayer. At 355–360 (EVSAIN) the chain is on the periplasmic side. A helical membrane pass occupies residues 361–381 (ILLLILSVGALVSITLMLAVP). Topologically, residues 382 to 396 (KMSEMVVNEQIPESA) are cytoplasmic.

It belongs to the major facilitator superfamily. DHA1 family. MdtL (TC 2.A.1.2.22) subfamily.

Its subcellular location is the cell inner membrane. The polypeptide is Multidrug resistance protein MdtL (mdtL) (Shewanella oneidensis (strain ATCC 700550 / JCM 31522 / CIP 106686 / LMG 19005 / NCIMB 14063 / MR-1)).